We begin with the raw amino-acid sequence, 286 residues long: Probable ketoamine kinase YniA (286 aa).

ATP is bound at residue 91-93 (DYL). Aspartate 193 serves as the catalytic Proton acceptor.

Belongs to the fructosamine kinase family.

Its function is as follows. Ketoamine kinase that phosphorylates ketoamines on the third carbon of the sugar moiety to generate ketoamine 3-phosphate. Its precise substrate are unknown: does not have ribulosamine and/or erythrulosamine 3-kinase activity in vitro. The polypeptide is Probable ketoamine kinase YniA (yniA) (Escherichia coli (strain K12)).